A 72-amino-acid chain; its full sequence is Small ribosomal subunit protein bS18c (72 aa).

The protein belongs to the bacterial ribosomal protein bS18 family. As to quaternary structure, part of the 30S ribosomal subunit.

The protein resides in the plastid. It localises to the chloroplast. The protein is Small ribosomal subunit protein bS18c of Phaeodactylum tricornutum (strain CCAP 1055/1).